The chain runs to 261 residues: tRNA pseudouridine synthase A (261 aa).

Catalysis depends on D51, which acts as the Nucleophile. Y109 is a substrate binding site.

This sequence belongs to the tRNA pseudouridine synthase TruA family. As to quaternary structure, homodimer.

The catalysed reaction is uridine(38/39/40) in tRNA = pseudouridine(38/39/40) in tRNA. Functionally, formation of pseudouridine at positions 38, 39 and 40 in the anticodon stem and loop of transfer RNAs. The chain is tRNA pseudouridine synthase A from Psychromonas ingrahamii (strain DSM 17664 / CCUG 51855 / 37).